A 965-amino-acid chain; its full sequence is Villin-3 (965 aa).

Gelsolin-like repeat units follow at residues 27–79 (ENFE…DEAG), 150–190 (VHLK…QERA), 262–304 (GQVE…EERK), 401–452 (ANSK…EDQE), 533–573 (NKAL…EQQE), and 635–676 (FQVE…KEKQ). Composition is skewed to low complexity over residues 769–780 (AFNSSSGRTSSP) and 808–828 (SSPS…ASQR). Disordered regions lie at residues 769 to 828 (AFNS…ASQR) and 840 to 906 (TAEK…GVTF). Residues 865–879 (EATEEATEAKEEEEV) are compositionally biased toward acidic residues. Serine 880 is subject to Phosphoserine. In terms of domain architecture, HP spans 900–965 (ETTGVTFTYE…DLLKKKFNLF (66 aa)).

Belongs to the villin/gelsolin family. As to expression, expressed in all tissues examined, including root hairs.

It is found in the cytoplasm. It localises to the cytoskeleton. Functionally, binds actin and actin filament bundles in a Ca(2+)-insensitive manner, but severs actin filaments in a calcium-dependent manner, regardless of the presence or not of VLN1 (AC O81643). Acts redundantly with VLN2 (AC O81644) to generate thick actin filament bundles, to regulate directional organ growth and in sclerenchyma development. The chain is Villin-3 from Arabidopsis thaliana (Mouse-ear cress).